Here is a 271-residue protein sequence, read N- to C-terminus: RELT-like protein 1 (271 aa).

An N-terminal signal peptide occupies residues 1–23 (MAPRGLPGSAVLAAAVFVGGAVS). Over 24–57 (SPLVRSDHSGSHPLPSKTETTPSPTNNNGNGHPE) the chain is Extracellular. Residues 27-52 (VRSDHSGSHPLPSKTETTPSPTNNNG) form a disordered region. The span at 36-52 (PLPSKTETTPSPTNNNG) shows a compositional bias: low complexity. Residues 58–78 (YIAYALVPVFFVMGLFGVLIC) traverse the membrane as a helical segment. The Cytoplasmic segment spans residues 79–271 (HLLKKKGYRC…PVKRQQSDSE (193 aa)). Residues Ser-109 and Ser-114 each carry the phosphoserine modification. 2 disordered regions span residues 144–168 (CDPE…LSPG) and 231–271 (TKVE…SDSE). Pro residues predominate over residues 155–165 (PGSPPVSPGPL). The span at 231–244 (TKVEPKSNQKERRS) shows a compositional bias: basic and acidic residues. 2 positions are modified to phosphoserine: Ser-244 and Ser-247.

It belongs to the RELT family. Interacts with RELT, RELL2, OXSR1 and PLSCR1.

It is found in the cell membrane. Its function is as follows. Induces activation of MAPK14/p38 cascade, when overexpressed. Induces apoptosis, when overexpressed. This Bos taurus (Bovine) protein is RELT-like protein 1 (RELL1).